The sequence spans 536 residues: Major facilitator superfamily domain-containing protein 4B (536 aa).

A run of 12 helical transmembrane segments spans residues 19–39, 53–73, 81–101, 105–125, 140–160, 211–231, 297–317, 341–361, 366–386, 391–411, 428–448, and 456–476; these read LTYW…GPTI, ITWV…SGGA, ALLA…IIPL, VLLL…IDTI, IFLQ…PLIA, YAFW…FVLM, FFLI…IMGV, LNCI…PLSY, VHLL…LMIL, VFLF…FPCL, VLVT…GTLI, and FLVC…SVIL.

The protein belongs to the major facilitator superfamily.

Its subcellular location is the membrane. The polypeptide is Major facilitator superfamily domain-containing protein 4B (Danio rerio (Zebrafish)).